The sequence spans 109 residues: Large ribosomal subunit protein uL23 (109 aa).

Belongs to the universal ribosomal protein uL23 family. As to quaternary structure, part of the 50S ribosomal subunit. Contacts protein L29, and trigger factor when it is bound to the ribosome.

Functionally, one of the early assembly proteins it binds 23S rRNA. One of the proteins that surrounds the polypeptide exit tunnel on the outside of the ribosome. Forms the main docking site for trigger factor binding to the ribosome. In Haemophilus influenzae (strain PittEE), this protein is Large ribosomal subunit protein uL23.